An 801-amino-acid polypeptide reads, in one-letter code: Cation/H(+) antiporter 7 (801 aa).

13 helical membrane passes run 58–78 (PNLE…EILF), 83–103 (IPIP…LFSY), 128–148 (GAFG…VGML), 154–174 (RAAL…YILM), 192–212 (EIIL…LTDL), 223–243 (VQSC…GTVL), 254–274 (IVIV…MLWI), 287–307 (VYIY…LNFF), 312–332 (YGWF…SALI), 340–360 (VGVL…ISWL), 377–397 (AISV…ITAF), 407–427 (IVLA…LGYI), and 438–458 (FTIA…AIEF).

The protein belongs to the monovalent cation:proton antiporter 2 (CPA2) transporter (TC 2.A.37) family. CHX (TC 2.A.37.4) subfamily. Expressed in pollen.

It is found in the membrane. May operate as a cation/H(+) antiporter. In Arabidopsis thaliana (Mouse-ear cress), this protein is Cation/H(+) antiporter 7 (CHX7).